We begin with the raw amino-acid sequence, 245 residues long: tRNA (guanine-N(7)-)-methyltransferase (245 aa).

E69, E94, D121, and D144 together coordinate S-adenosyl-L-methionine. D144 is an active-site residue. Substrate contacts are provided by residues K148, D180, and T217–E220. Positions N200–G225 are disordered. The segment covering P209–G225 has biased composition (basic and acidic residues).

This sequence belongs to the class I-like SAM-binding methyltransferase superfamily. TrmB family.

It catalyses the reaction guanosine(46) in tRNA + S-adenosyl-L-methionine = N(7)-methylguanosine(46) in tRNA + S-adenosyl-L-homocysteine. It functions in the pathway tRNA modification; N(7)-methylguanine-tRNA biosynthesis. Its function is as follows. Catalyzes the formation of N(7)-methylguanine at position 46 (m7G46) in tRNA. This chain is tRNA (guanine-N(7)-)-methyltransferase, found in Idiomarina loihiensis (strain ATCC BAA-735 / DSM 15497 / L2-TR).